The sequence spans 254 residues: MPLAKRIIPCLDIRDGRVVKNVQFHLNTWDAGDPVALAAEYDRQGADEIVFLDINASWEGRSATLDVLSRAAEQVFVPLTIGGGVSAVEHVKAYLRAGADKVSVNTAAVQRPDLIDEIADLFGSSTLVVAIDCKRRPEGGWEVYLHGGRTPTGIDAVAWAEEAARRGAGELLVTSMDADGTRQGYDIALHQALADAVGVPVIASGGAGSPEDILEVLTVGRADAALAASIFHSGRHTVGEVKAFLRERGVLVRS.

Catalysis depends on residues aspartate 12 and aspartate 132.

This sequence belongs to the HisA/HisF family. Heterodimer of HisH and HisF.

It localises to the cytoplasm. It catalyses the reaction 5-[(5-phospho-1-deoxy-D-ribulos-1-ylimino)methylamino]-1-(5-phospho-beta-D-ribosyl)imidazole-4-carboxamide + L-glutamine = D-erythro-1-(imidazol-4-yl)glycerol 3-phosphate + 5-amino-1-(5-phospho-beta-D-ribosyl)imidazole-4-carboxamide + L-glutamate + H(+). Its pathway is amino-acid biosynthesis; L-histidine biosynthesis; L-histidine from 5-phospho-alpha-D-ribose 1-diphosphate: step 5/9. IGPS catalyzes the conversion of PRFAR and glutamine to IGP, AICAR and glutamate. The HisF subunit catalyzes the cyclization activity that produces IGP and AICAR from PRFAR using the ammonia provided by the HisH subunit. The protein is Imidazole glycerol phosphate synthase subunit HisF of Symbiobacterium thermophilum (strain DSM 24528 / JCM 14929 / IAM 14863 / T).